The sequence spans 569 residues: Urease subunit alpha (569 aa).

Residues 131–569 (GGVDAHIHFI…VAMAQRYFLF (439 aa)) form the Urease domain. Residues histidine 136, histidine 138, and lysine 219 each contribute to the Ni(2+) site. The residue at position 219 (lysine 219) is an N6-carboxylysine. Histidine 221 contacts substrate. 2 residues coordinate Ni(2+): histidine 248 and histidine 274. Histidine 322 serves as the catalytic Proton donor. Aspartate 362 contacts Ni(2+).

The protein belongs to the metallo-dependent hydrolases superfamily. Urease alpha subunit family. In terms of assembly, heterotrimer of UreA (gamma), UreB (beta) and UreC (alpha) subunits. Three heterotrimers associate to form the active enzyme. The cofactor is Ni cation. Carboxylation allows a single lysine to coordinate two nickel ions.

It localises to the cytoplasm. The catalysed reaction is urea + 2 H2O + H(+) = hydrogencarbonate + 2 NH4(+). Its pathway is nitrogen metabolism; urea degradation; CO(2) and NH(3) from urea (urease route): step 1/1. This chain is Urease subunit alpha, found in Geobacillus kaustophilus (strain HTA426).